An 84-amino-acid polypeptide reads, in one-letter code: ATP synthase subunit c (84 aa).

2 helical membrane-spanning segments follow: residues 1 to 21 and 53 to 73; these read MLAWVIIVSIITAGLSVALVG and LLFALAFIETIMIFTLTVALI.

The protein belongs to the ATPase C chain family. F-type ATPases have 2 components, F(1) - the catalytic core - and F(0) - the membrane proton channel. F(1) has five subunits: alpha(3), beta(3), gamma(1), delta(1), epsilon(1). F(0) has three main subunits: a(1), b(2) and c(10-14). The alpha and beta chains form an alternating ring which encloses part of the gamma chain. F(1) is attached to F(0) by a central stalk formed by the gamma and epsilon chains, while a peripheral stalk is formed by the delta and b chains.

The protein resides in the cell inner membrane. In terms of biological role, f(1)F(0) ATP synthase produces ATP from ADP in the presence of a proton or sodium gradient. F-type ATPases consist of two structural domains, F(1) containing the extramembraneous catalytic core and F(0) containing the membrane proton channel, linked together by a central stalk and a peripheral stalk. During catalysis, ATP synthesis in the catalytic domain of F(1) is coupled via a rotary mechanism of the central stalk subunits to proton translocation. Key component of the F(0) channel; it plays a direct role in translocation across the membrane. A homomeric c-ring of between 10-14 subunits forms the central stalk rotor element with the F(1) delta and epsilon subunits. The protein is ATP synthase subunit c of Dictyoglomus thermophilum (strain ATCC 35947 / DSM 3960 / H-6-12).